The sequence spans 296 residues: Putative S-adenosyl-L-methionine-dependent methyltransferase MAV_4764 (296 aa).

Residues Asp121 and 150–151 (DL) contribute to the S-adenosyl-L-methionine site.

It belongs to the UPF0677 family.

Functionally, exhibits S-adenosyl-L-methionine-dependent methyltransferase activity. This Mycobacterium avium (strain 104) protein is Putative S-adenosyl-L-methionine-dependent methyltransferase MAV_4764.